The following is a 133-amino-acid chain: Large ribosomal subunit protein uL15 (133 aa).

The disordered stretch occupies residues 1 to 62 (MALHNLQPAP…GQQPLQRRLP (62 aa)). Polar residues predominate over residues 32 to 45 (TRGQKGQKSRTGYS).

It belongs to the universal ribosomal protein uL15 family. In terms of assembly, part of the 50S ribosomal subunit.

Binds to the 23S rRNA. This chain is Large ribosomal subunit protein uL15, found in Nitratiruptor sp. (strain SB155-2).